We begin with the raw amino-acid sequence, 137 residues long: Putative pre-16S rRNA nuclease (137 aa).

It belongs to the YqgF nuclease family.

The protein resides in the cytoplasm. Could be a nuclease involved in processing of the 5'-end of pre-16S rRNA. This Anaeromyxobacter dehalogenans (strain 2CP-C) protein is Putative pre-16S rRNA nuclease.